The chain runs to 293 residues: Elongation factor Ts (293 aa).

The segment at 81–84 (TDFV) is involved in Mg(2+) ion dislocation from EF-Tu.

The protein belongs to the EF-Ts family.

Its subcellular location is the cytoplasm. In terms of biological role, associates with the EF-Tu.GDP complex and induces the exchange of GDP to GTP. It remains bound to the aminoacyl-tRNA.EF-Tu.GTP complex up to the GTP hydrolysis stage on the ribosome. The polypeptide is Elongation factor Ts (Teredinibacter turnerae (strain ATCC 39867 / T7901)).